Here is a 211-residue protein sequence, read N- to C-terminus: Ribonuclease HII (211 aa).

The region spanning 21-211 (SSIAGLDEAG…APLKSMFDVI (191 aa)) is the RNase H type-2 domain. Residues Asp27, Glu28, and Asp122 each contribute to the a divalent metal cation site.

It belongs to the RNase HII family. Mn(2+) is required as a cofactor. The cofactor is Mg(2+).

It localises to the cytoplasm. The enzyme catalyses Endonucleolytic cleavage to 5'-phosphomonoester.. Functionally, endonuclease that specifically degrades the RNA of RNA-DNA hybrids. This Dehalococcoides mccartyi (strain ATCC BAA-2266 / KCTC 15142 / 195) (Dehalococcoides ethenogenes (strain 195)) protein is Ribonuclease HII.